The following is a 320-amino-acid chain: Probable cell division protein WhiA (320 aa).

The H-T-H motif DNA-binding region spans 282 to 315 (SLEELGRAARPQISKDAVAGRIRRLLQRAEKAEQ).

Belongs to the WhiA family.

In terms of biological role, involved in cell division and chromosome segregation. This is Probable cell division protein WhiA from Bifidobacterium animalis subsp. lactis (strain AD011).